Here is a 492-residue protein sequence, read N- to C-terminus: Nuclear hormone receptor family member nhr-4 (492 aa).

Residues 47–122 (RLICDVCGDV…VGMNPDSVQN (76 aa)) constitute a DNA-binding region (nuclear receptor). 2 consecutive NR C4-type zinc fingers follow at residues 50–70 (CDVC…CNGC) and 86–110 (CRFG…LKKC). The interval 121–143 (QNERDRNAKNGGMGGPMSSPTQS) is disordered. The region spanning 215–481 (MDFSIHSAVL…ELIQATHKTT (267 aa)) is the NR LBD domain.

This sequence belongs to the nuclear hormone receptor family.

The protein localises to the nucleus. In terms of biological role, orphan nuclear receptor. The sequence is that of Nuclear hormone receptor family member nhr-4 (nhr-4) from Caenorhabditis elegans.